Here is a 105-residue protein sequence, read N- to C-terminus: UPF0045 protein ECM15 (105 aa).

It belongs to the UPF0045 family.

In Eremothecium gossypii (strain ATCC 10895 / CBS 109.51 / FGSC 9923 / NRRL Y-1056) (Yeast), this protein is UPF0045 protein ECM15 (ECM15).